The following is a 477-amino-acid chain: Oxidative stress-induced growth inhibitor 1 (477 aa).

Serine 12 carries the post-translational modification Phosphoserine.

Belongs to the OKL38 family. NADPH is required as a cofactor. As to expression, ubiquitous. Highest expression in the ovary, testis, kidney, skeletal muscle and liver.

It is found in the midbody. Functionally, monooxygenase catalytic activity. Involved in regulation of cytokinesis; promotes RHOA activity, probably acting locally at the midbody in late cytokinesis. Monooxygenase activity is involved in stabilizing transient structures between daughter cells, termed intercellular bridges, before abscission. Regulates differentiation and proliferation through the regulation of cell death. This is Oxidative stress-induced growth inhibitor 1 from Homo sapiens (Human).